The primary structure comprises 210 residues: Large ribosomal subunit protein bL25 (210 aa).

The tract at residues 185-210 (APEPAGQPEVPPEPAEEAKAKTIEKE) is disordered. Residues 200–210 (EEAKAKTIEKE) are compositionally biased toward basic and acidic residues.

It belongs to the bacterial ribosomal protein bL25 family. CTC subfamily. As to quaternary structure, part of the 50S ribosomal subunit; part of the 5S rRNA/L5/L18/L25 subcomplex. Contacts the 5S rRNA. Binds to the 5S rRNA independently of L5 and L18.

Functionally, this is one of the proteins that binds to the 5S RNA in the ribosome where it forms part of the central protuberance. The protein is Large ribosomal subunit protein bL25 of Desulforamulus reducens (strain ATCC BAA-1160 / DSM 100696 / MI-1) (Desulfotomaculum reducens).